Reading from the N-terminus, the 893-residue chain is Translation initiation factor IF-2 (893 aa).

Residues 49 to 303 (LNREAGSGPD…KGSSLQQGFQ (255 aa)) are disordered. Over residues 68–82 (STLNIPGTGGKSKSV) the composition is skewed to polar residues. 2 stretches are compositionally biased toward basic and acidic residues: residues 93 to 159 (VKRD…KDKV) and 166 to 216 (DMTK…EENK). Positions 254 to 269 (GRGRNAKAARPAKKGN) are enriched in basic residues. A compositionally biased stretch (basic and acidic residues) spans 270–283 (KHAESKADREEARA). The 170-residue stretch at 392 to 561 (PRAPVVTIMG…LLQAEVLELK (170 aa)) folds into the tr-type G domain. The interval 401 to 408 (GHVDHGKT) is G1. 401–408 (GHVDHGKT) contacts GTP. Positions 426–430 (GITQH) are G2. Residues 447–450 (DTPG) are G3. GTP-binding positions include 447–451 (DTPGH) and 501–504 (NKID). The interval 501 to 504 (NKID) is G4. A G5 region spans residues 537–539 (SAK).

This sequence belongs to the TRAFAC class translation factor GTPase superfamily. Classic translation factor GTPase family. IF-2 subfamily.

It localises to the cytoplasm. Functionally, one of the essential components for the initiation of protein synthesis. Protects formylmethionyl-tRNA from spontaneous hydrolysis and promotes its binding to the 30S ribosomal subunits. Also involved in the hydrolysis of GTP during the formation of the 70S ribosomal complex. This is Translation initiation factor IF-2 from Salmonella arizonae (strain ATCC BAA-731 / CDC346-86 / RSK2980).